A 481-amino-acid chain; its full sequence is Proline--tRNA ligase (481 aa).

It belongs to the class-II aminoacyl-tRNA synthetase family. ProS type 3 subfamily. In terms of assembly, homodimer.

It localises to the cytoplasm. The catalysed reaction is tRNA(Pro) + L-proline + ATP = L-prolyl-tRNA(Pro) + AMP + diphosphate. Its function is as follows. Catalyzes the attachment of proline to tRNA(Pro) in a two-step reaction: proline is first activated by ATP to form Pro-AMP and then transferred to the acceptor end of tRNA(Pro). This Saccharolobus islandicus (strain Y.N.15.51 / Yellowstone #2) (Sulfolobus islandicus) protein is Proline--tRNA ligase.